Reading from the N-terminus, the 473-residue chain is H(+)/Cl(-) exchange transporter ClcA (473 aa).

Over 1–32 the chain is Cytoplasmic; the sequence is MKTDTSTFLAQQIVRLRRRDQIRRLMQRDKTP. Residues 33 to 69 form a helical membrane-spanning segment; the sequence is LAILLMAAVVGTLTGLVGVAFEKAVSWVQNMRIGALV. Over 70–76 the chain is Periplasmic; that stretch reads QVADHAF. A helical membrane pass occupies residues 77–100; it reads LLWPLAFILSALLAMVGYFLVRKF. The Selectivity filter part_1 signature appears at 106–110; sequence GSGIP. Ser107 is a chloride binding site. Positions 109-116 form an intramembrane region, helical; it reads IPEIEGAL. The Cytoplasmic segment spans residues 117 to 123; the sequence is EELRPVR. The next 2 helical transmembrane spans lie at 124-141 and 148-166; these read WWRVLPVKFIGGMGTLGA and EGPTVQIGGNLGRMVLDVF. The Selectivity filter part_2 motif lies at 146–150; it reads GREGP. Over 167-176 the chain is Cytoplasmic; that stretch reads RMRSAEARHT. Intramembrane regions (helical) lie at residues 177 to 189 and 193 to 201; these read LLATGAAAGLSAA and PLAGILFII. Over 202 to 214 the chain is Cytoplasmic; the sequence is EEMRPQFRYNLIS. Residues 215 to 232 traverse the membrane as a helical segment; that stretch reads IKAVFTGVIMSSIVFRIF. Residues 233–252 are Periplasmic-facing; sequence NGEAPIIEVGKLSDAPVNTL. A helical membrane pass occupies residues 253 to 281; that stretch reads WLYLILGIIFGCVGPVFNSLVLRTQDMFQ. The Cytoplasmic portion of the chain corresponds to 282-287; it reads RFHGGE. A helical membrane pass occupies residues 288 to 309; that stretch reads IKKWVLMGGAIGGLCGILGLIE. Topologically, residues 310–329 are periplasmic; that stretch reads PEAAGGGFNLIPIAAAGNFS. Helical transmembrane passes span 330 to 349 and 355 to 376; these read VGLLLFIFITRVVTTLLCFS and GIFAPMLALGTLLGTAFGMAAA. The short motif at 355 to 359 is the Selectivity filter part_3 element; sequence GIFAP. Positions 356 and 357 each coordinate chloride. Residues 377–386 are Periplasmic-facing; the sequence is VLFPQYHLEA. The helical intramembrane region spans 387–401; sequence GTFAIAGMGALMAAS. Positions 402–404 form an intramembrane region, note=Loop between two helices; the sequence is VRA. Residues 405 to 416 constitute an intramembrane region (helical); the sequence is PLTGIVLVLEMT. Residues 417–421 constitute an intramembrane region (note=Loop between two helices); sequence DNYQL. The helical transmembrane segment at 422–438 threads the bilayer; that stretch reads ILPMIITCLGATLLAQF. At 439 to 473 the chain is on the cytoplasmic side; that stretch reads LGGKPLYSTILARTLAKQDAEQAAKNQNAPAGENT. Tyr445 is a binding site for chloride.

Belongs to the chloride channel (TC 2.A.49) family. ClcA subfamily. Homodimer.

It is found in the cell inner membrane. The enzyme catalyses 2 chloride(in) + H(+)(out) = 2 chloride(out) + H(+)(in). In terms of biological role, proton-coupled chloride transporter. Functions as antiport system and exchanges two chloride ions for 1 proton. Probably acts as an electrical shunt for an outwardly-directed proton pump that is linked to amino acid decarboxylation, as part of the extreme acid resistance (XAR) response. The chain is H(+)/Cl(-) exchange transporter ClcA from Salmonella newport (strain SL254).